The sequence spans 379 residues: uncharacterized protein (379 aa).

Disordered stretches follow at residues 1 to 25, 128 to 158, and 355 to 379; these read MASD…EKGK, QGKT…IERT, and TEKT…QGDI. The span at 128–141 shows a compositional bias: polar residues; sequence QGKTTSATTSNSTI.

This is an uncharacterized protein from Caenorhabditis elegans.